A 187-amino-acid polypeptide reads, in one-letter code: UPF0340 protein SPD_0576 (187 aa).

It belongs to the UPF0340 family.

The chain is UPF0340 protein SPD_0576 from Streptococcus pneumoniae serotype 2 (strain D39 / NCTC 7466).